Reading from the N-terminus, the 333-residue chain is MRLDQIFATLFNNQPLTQEQSAEFFRAVVNGEVAPEQLSAALIALKLRGETIDEIAGAVTALLTAAQPFPAPDYPFADIVGTGGDGANTINISTASAIVGASLGLKIAKHGNRSVSSKTGASDLLSCLGVDINMSAENARQALDEIGLAFVFAQKYHTGFKHAVPVRQALKTRTIFNILGPLINPAHAKRQLLGVYSPELLKPYAQTNARLNREHSIIVHGSGLDEVAIHGKTQVAELRDGKIEYYELSPQDFGFDVKPLENLRGGEPRENAEIITALLQGRGTDEQNQAVAMNTALLMKLFGHENIKQNAEQVLAQLASGRAFDTLVKLTAY.

5-phospho-alpha-D-ribose 1-diphosphate-binding positions include Gly-81, 84 to 85 (GD), Thr-89, 91 to 94 (NIST), 109 to 117 (KHGNRSVSS), and Ala-121. Gly-81 is an anthranilate binding site. A Mg(2+)-binding site is contributed by Ser-93. An anthranilate-binding site is contributed by Asn-112. Arg-167 serves as a coordination point for anthranilate. Mg(2+)-binding residues include Asp-225 and Glu-226.

This sequence belongs to the anthranilate phosphoribosyltransferase family. Homodimer. Mg(2+) is required as a cofactor.

The enzyme catalyses N-(5-phospho-beta-D-ribosyl)anthranilate + diphosphate = 5-phospho-alpha-D-ribose 1-diphosphate + anthranilate. The protein operates within amino-acid biosynthesis; L-tryptophan biosynthesis; L-tryptophan from chorismate: step 2/5. Functionally, catalyzes the transfer of the phosphoribosyl group of 5-phosphorylribose-1-pyrophosphate (PRPP) to anthranilate to yield N-(5'-phosphoribosyl)-anthranilate (PRA). The protein is Anthranilate phosphoribosyltransferase of Actinobacillus succinogenes (strain ATCC 55618 / DSM 22257 / CCUG 43843 / 130Z).